We begin with the raw amino-acid sequence, 205 residues long: Ribonuclease HII (205 aa).

The RNase H type-2 domain maps to 14–201; the sequence is EIIAGVDEAG…KGNINHSAIL (188 aa). Positions 20, 21, and 111 each coordinate a divalent metal cation.

It belongs to the RNase HII family. It depends on Mn(2+) as a cofactor. The cofactor is Mg(2+).

The protein resides in the cytoplasm. The catalysed reaction is Endonucleolytic cleavage to 5'-phosphomonoester.. Its function is as follows. Endonuclease that specifically degrades the RNA of RNA-DNA hybrids. This Orientia tsutsugamushi (strain Ikeda) (Rickettsia tsutsugamushi) protein is Ribonuclease HII.